Reading from the N-terminus, the 282-residue chain is Phosphate import ATP-binding protein PstB (282 aa).

The span at 1–10 (MNMAESHLDP) shows a compositional bias: basic and acidic residues. The segment at 1-24 (MNMAESHLDPSKLATGPAGAGAAT) is disordered. Low complexity predominate over residues 14 to 24 (ATGPAGAGAAT). The ABC transporter domain occupies 36–277 (IEVKNLNFFY…PARKETEDYI (242 aa)). 68 to 75 (GPSGCGKS) contributes to the ATP binding site.

The protein belongs to the ABC transporter superfamily. Phosphate importer (TC 3.A.1.7) family. As to quaternary structure, the complex is composed of two ATP-binding proteins (PstB), two transmembrane proteins (PstC and PstA) and a solute-binding protein (PstS).

Its subcellular location is the cell inner membrane. It catalyses the reaction phosphate(out) + ATP + H2O = ADP + 2 phosphate(in) + H(+). Its function is as follows. Part of the ABC transporter complex PstSACB involved in phosphate import. Responsible for energy coupling to the transport system. This Burkholderia thailandensis (strain ATCC 700388 / DSM 13276 / CCUG 48851 / CIP 106301 / E264) protein is Phosphate import ATP-binding protein PstB.